Reading from the N-terminus, the 142-residue chain is Small ribosomal subunit protein uS12 (142 aa).

The tract at residues 1–44 (MANGKYAARKLKQDRQKHRWSDSDYARRARGLGKKSDPLEGAPQ) is disordered. The segment covering 11–27 (LKQDRQKHRWSDSDYAR) has biased composition (basic and acidic residues).

Belongs to the universal ribosomal protein uS12 family. In terms of assembly, part of the 30S ribosomal subunit.

Its function is as follows. With S4 and S5 plays an important role in translational accuracy. Located at the interface of the 30S and 50S subunits. The chain is Small ribosomal subunit protein uS12 from Natronomonas pharaonis (strain ATCC 35678 / DSM 2160 / CIP 103997 / JCM 8858 / NBRC 14720 / NCIMB 2260 / Gabara) (Halobacterium pharaonis).